Reading from the N-terminus, the 199-residue chain is Probable chemoreceptor glutamine deamidase CheD (199 aa).

Belongs to the CheD family.

It catalyses the reaction L-glutaminyl-[protein] + H2O = L-glutamyl-[protein] + NH4(+). Its function is as follows. Probably deamidates glutamine residues to glutamate on methyl-accepting chemotaxis receptors (MCPs), playing an important role in chemotaxis. The sequence is that of Probable chemoreceptor glutamine deamidase CheD from Cereibacter sphaeroides (strain ATCC 17029 / ATH 2.4.9) (Rhodobacter sphaeroides).